The sequence spans 115 residues: Ribosomal protein uS4-like (115 aa).

This sequence belongs to the universal ribosomal protein uS4 family.

This is Ribosomal protein uS4-like from Azoarcus sp. (strain BH72).